The sequence spans 439 residues: Glutamate-1-semialdehyde 2,1-aminomutase (439 aa).

At K279 the chain carries N6-(pyridoxal phosphate)lysine.

Belongs to the class-III pyridoxal-phosphate-dependent aminotransferase family. HemL subfamily. In terms of assembly, homodimer. The cofactor is pyridoxal 5'-phosphate.

Its subcellular location is the cytoplasm. The catalysed reaction is (S)-4-amino-5-oxopentanoate = 5-aminolevulinate. The protein operates within porphyrin-containing compound metabolism; protoporphyrin-IX biosynthesis; 5-aminolevulinate from L-glutamyl-tRNA(Glu): step 2/2. The sequence is that of Glutamate-1-semialdehyde 2,1-aminomutase from Rhodopirellula baltica (strain DSM 10527 / NCIMB 13988 / SH1).